The chain runs to 196 residues: dITP/XTP pyrophosphatase (196 aa).

Residue 8–13 (TKNEGK) participates in substrate binding. Glu-41 and Asp-70 together coordinate Mg(2+). Asp-70 (proton acceptor) is an active-site residue. Substrate-binding positions include Ser-71, 153–156 (FGYD), Lys-176, and 181–182 (HR).

It belongs to the HAM1 NTPase family. Homodimer. The cofactor is Mg(2+).

It catalyses the reaction XTP + H2O = XMP + diphosphate + H(+). It carries out the reaction dITP + H2O = dIMP + diphosphate + H(+). The catalysed reaction is ITP + H2O = IMP + diphosphate + H(+). Its function is as follows. Pyrophosphatase that catalyzes the hydrolysis of nucleoside triphosphates to their monophosphate derivatives, with a high preference for the non-canonical purine nucleotides XTP (xanthosine triphosphate), dITP (deoxyinosine triphosphate) and ITP. Seems to function as a house-cleaning enzyme that removes non-canonical purine nucleotides from the nucleotide pool, thus preventing their incorporation into DNA/RNA and avoiding chromosomal lesions. The protein is dITP/XTP pyrophosphatase of Bacillus licheniformis (strain ATCC 14580 / DSM 13 / JCM 2505 / CCUG 7422 / NBRC 12200 / NCIMB 9375 / NCTC 10341 / NRRL NRS-1264 / Gibson 46).